A 111-amino-acid polypeptide reads, in one-letter code: Large ribosomal subunit protein uL22 (111 aa).

Belongs to the universal ribosomal protein uL22 family. In terms of assembly, part of the 50S ribosomal subunit.

This protein binds specifically to 23S rRNA; its binding is stimulated by other ribosomal proteins, e.g. L4, L17, and L20. It is important during the early stages of 50S assembly. It makes multiple contacts with different domains of the 23S rRNA in the assembled 50S subunit and ribosome. Its function is as follows. The globular domain of the protein is located near the polypeptide exit tunnel on the outside of the subunit, while an extended beta-hairpin is found that lines the wall of the exit tunnel in the center of the 70S ribosome. The polypeptide is Large ribosomal subunit protein uL22 (Chlamydia trachomatis serovar A (strain ATCC VR-571B / DSM 19440 / HAR-13)).